The chain runs to 291 residues: S-methyl-5'-thioadenosine phosphorylase (291 aa).

Residues serine 12, 54-55, and 87-88 each bind phosphate; these read RH and SA. Residue methionine 185 participates in substrate binding. Threonine 186 serves as a coordination point for phosphate. 209-211 serves as a coordination point for substrate; sequence DFD.

This sequence belongs to the PNP/MTAP phosphorylase family. MTAP subfamily. As to quaternary structure, homohexamer. Dimer of a homotrimer.

It carries out the reaction S-methyl-5'-thioadenosine + phosphate = 5-(methylsulfanyl)-alpha-D-ribose 1-phosphate + adenine. Its pathway is amino-acid biosynthesis; L-methionine biosynthesis via salvage pathway; S-methyl-5-thio-alpha-D-ribose 1-phosphate from S-methyl-5'-thioadenosine (phosphorylase route): step 1/1. Catalyzes the reversible phosphorylation of S-methyl-5'-thioadenosine (MTA) to adenine and 5-methylthioribose-1-phosphate. Involved in the breakdown of MTA, a major by-product of polyamine biosynthesis. Responsible for the first step in the methionine salvage pathway after MTA has been generated from S-adenosylmethionine. Has broad substrate specificity with 6-aminopurine nucleosides as preferred substrates. The protein is S-methyl-5'-thioadenosine phosphorylase of Bradyrhizobium diazoefficiens (strain JCM 10833 / BCRC 13528 / IAM 13628 / NBRC 14792 / USDA 110).